A 118-amino-acid polypeptide reads, in one-letter code: Transcription factor PAR2 (118 aa).

A disordered region spans residues 1–59 (MEKTLATSHTKRSSPPSPSSAVNTSSTGFNRRTRQRLSDATASVSETDVEDEDEDEEGV). The span at 19-30 (SSAVNTSSTGFN) shows a compositional bias: polar residues. One can recognise a bHLH domain in the interval 43 to 92 (SVSETDVEDEDEDEEGVEEKIEALQTIVPGGTELGVDALFEETASYILAL). The segment covering 47 to 59 (TDVEDEDEDEEGV) has biased composition (acidic residues).

This sequence belongs to the bHLH protein family. As to quaternary structure, homodimer.

The protein localises to the nucleus. Its function is as follows. Atypical bHLH transcription factor that acts as a negative regulator of a variety of shade avoidance syndrome (SAS) responses, including seedling elongation and photosynthetic pigment accumulation. Acts as a direct transcriptional repressor of two auxin-responsive genes, SAUR15 and SAUR68. May function in integrating shade and hormone transcriptional networks in response to light and auxin changes. This Arabidopsis thaliana (Mouse-ear cress) protein is Transcription factor PAR2 (PAR2).